The primary structure comprises 417 residues: Imidazolonepropionase (417 aa).

Residues H77 and H79 each coordinate Fe(3+). Zn(2+)-binding residues include H77 and H79. 3 residues coordinate 4-imidazolone-5-propanoate: R86, Y149, and H182. Residue Y149 coordinates N-formimidoyl-L-glutamate. H244 is a Fe(3+) binding site. H244 is a binding site for Zn(2+). E247 is a 4-imidazolone-5-propanoate binding site. D323 lines the Fe(3+) pocket. Position 323 (D323) interacts with Zn(2+). An N-formimidoyl-L-glutamate-binding site is contributed by N325.

It belongs to the metallo-dependent hydrolases superfamily. HutI family. Zn(2+) serves as cofactor. Requires Fe(3+) as cofactor.

It is found in the cytoplasm. It catalyses the reaction 4-imidazolone-5-propanoate + H2O = N-formimidoyl-L-glutamate. The protein operates within amino-acid degradation; L-histidine degradation into L-glutamate; N-formimidoyl-L-glutamate from L-histidine: step 3/3. Its function is as follows. Catalyzes the hydrolytic cleavage of the carbon-nitrogen bond in imidazolone-5-propanoate to yield N-formimidoyl-L-glutamate. It is the third step in the universal histidine degradation pathway. This is Imidazolonepropionase from Halobacterium salinarum (strain ATCC 29341 / DSM 671 / R1).